Consider the following 610-residue polypeptide: Sodium-coupled monocarboxylate transporter 1 (610 aa).

Over 1-9 (MDTPRGIGT) the chain is Extracellular. The chain crosses the membrane as a helical span at residues 10-30 (FVVWDYVVFAGMLVISAAIGI). Over 31-51 (YYAFAGGGQQTSKDFLMGGRR) the chain is Cytoplasmic. A helical membrane pass occupies residues 52-72 (MTAVPVALSLTASFMSAVTVL). Residues 73-83 (GTPSEVYRFGA) lie on the Extracellular side of the membrane. A helical transmembrane segment spans residues 84–104 (IFSIFAFTYFFVVVISAEVFL). Residues 105–132 (PVFYKLGITSTYEYLELRFNKCVRLCGT) lie on the Cytoplasmic side of the membrane. The helical transmembrane segment at 133-153 (VLFIVQTILYTGIVIYAPALA) threads the bilayer. At 154–161 (LNQVTGFD) the chain is on the extracellular side. Residues 162–182 (LWGAVVATGVVCTFYCTLGGL) traverse the membrane as a helical segment. Over 183–189 (KAVIWTD) the chain is Cytoplasmic. Residues 190–210 (VFQVGIMVAGFASVIIQAVVM) traverse the membrane as a helical segment. Residues 211 to 239 (QGGISTILNDAYDGGRLNFWNFNPNPLQR) are Extracellular-facing. Residues 240 to 260 (HTFWTIIIGGTFTWTSIYGVN) traverse the membrane as a helical segment. Over 261–279 (QSQVQRYISCKSRFQAKLS) the chain is Cytoplasmic. The chain crosses the membrane as a helical span at residues 280–300 (LYINLVGLWAILTCSVFCGLA). The Extracellular segment spans residues 301-336 (LYSRYHDCDPWTAKKVSAPDQLMPYLVLDILQDYPG). The chain crosses the membrane as a helical span at residues 337-359 (LPGLFVACAYSGTLSTVSSSINA). Topologically, residues 360–389 (LAAVTVEDLIKPYFRSLSERSLSWISQGMS) are cytoplasmic. Residues 390–410 (VVYGALCIGMAALASLMGALL) form a helical membrane-spanning segment. Topologically, residues 411–415 (QAALS) are extracellular. A helical membrane pass occupies residues 416 to 436 (VFGMVGGPLMGLFALGILVPF). At 437–439 (ANS) the chain is on the cytoplasmic side. The chain crosses the membrane as a helical span at residues 440-460 (IGALVGLMAGFAISLWVGIGA). Topologically, residues 461 to 518 (QIYPPLPERTLPLHLDIQGCNSTYNETNLMTTTEMPFTTSVFQIYNVQRTPLMDNWYS) are extracellular. An N-linked (GlcNAc...) asparagine glycan is attached at Asn485. A helical membrane pass occupies residues 519-539 (LSYLYFSTVGTLVTLLVGILV). The Cytoplasmic segment spans residues 540 to 610 (SLSTGGRKQN…QSGKSNGTRL (71 aa)). Residues 585 to 610 (GGTDNPAFNHIELNSDQSGKSNGTRL) form a disordered region. The span at 596–610 (ELNSDQSGKSNGTRL) shows a compositional bias: polar residues. A PDZ-binding motif is present at residues 608–610 (TRL).

This sequence belongs to the sodium:solute symporter (SSF) (TC 2.A.21) family. In terms of assembly, interacts (via PDZ-binding motif) with PDZK1 (via PDZ domains 1 and 3); interaction increases nicotinate transport activity of SLC5A8. Expressed in normal thyroid, localized at the apical pole of thyroid cells facing the colloid lumen, but expression profoundly decreased in thyroid carcinomas. Expressed in normal colon but absent in colon aberrant crypt foci and colon cancers. Present in normal kidney cortex, brain, prostate, gastric mucosa and breast tissue but was significantly down-regulated in primary gliomas, gastric cancer, prostate tumors and breast tumors.

The protein resides in the apical cell membrane. It carries out the reaction (S)-lactate(out) + 2 Na(+)(out) = (S)-lactate(in) + 2 Na(+)(in). It catalyses the reaction propanoate(out) + 2 Na(+)(out) = propanoate(in) + 2 Na(+)(in). The catalysed reaction is pyruvate(out) + 2 Na(+)(out) = pyruvate(in) + 2 Na(+)(in). The enzyme catalyses acetate(out) + 2 Na(+)(out) = acetate(in) + 2 Na(+)(in). It carries out the reaction butanoate(out) + 2 Na(+)(out) = butanoate(in) + 2 Na(+)(in). It catalyses the reaction nicotinate(out) + 2 Na(+)(out) = nicotinate(in) + 2 Na(+)(in). The catalysed reaction is (R)-3-hydroxybutanoate(out) + 2 Na(+)(out) = (R)-3-hydroxybutanoate(in) + 2 Na(+)(in). The enzyme catalyses acetoacetate(out) + 2 Na(+)(out) = acetoacetate(in) + 2 Na(+)(in). It carries out the reaction 4-methyl-2-oxopentanoate(out) + 2 Na(+)(out) = 4-methyl-2-oxopentanoate(in) + 2 Na(+)(in). It catalyses the reaction 5-oxo-L-proline(out) + 2 Na(+)(out) = 5-oxo-L-proline(in) + 2 Na(+)(in). The catalysed reaction is iodide(out) = iodide(in). The enzyme catalyses chloride(in) = chloride(out). It carries out the reaction nitrate(in) = nitrate(out). It catalyses the reaction bromide(in) = bromide(out). With respect to regulation, increase of iodide influx inhibited by addition of perchlorate (NaClO(4)), a competitive inhibitor of iodide uptake catalyzed by sodium iodide symporter (NIS). Cotransport of monocarboxylates and nicotinate strongly inhibited by probenecid, nonsteroid anti-inflammatory drugs (ibuprofen, fenoprofen, ketprofen, naproxen) in a Na(+)-dependent manner or by prolonged exposure to external concentrations of monocarboxylates. In terms of biological role, acts as an electrogenic sodium (Na(+)) and chloride (Cl-)-dependent sodium-coupled solute transporter, including transport of monocarboxylates (short-chain fatty acids including L-lactate, D-lactate, pyruvate, acetate, propionate, valerate and butyrate), mocarboxylate drugs (nicotinate, benzoate, salicylate and 5-aminosalicylate) and ketone bodies (beta-D-hydroxybutyrate, acetoacetate and alpha-ketoisocaproate), with a Na(+):substrate stoichiometry of between 4:1 and 2:1. Catalyzes passive carrier mediated diffusion of iodide. Mediates iodide transport from the thyrocyte into the colloid lumen through the apical membrane. May be responsible for the absorption of D-lactate and monocarboxylate drugs from the intestinal tract. Acts as a tumor suppressor, suppressing colony formation in colon cancer, prostate cancer and glioma cell lines. May play a critical role in the entry of L-lactate and ketone bodies into neurons by a process driven by an electrochemical Na(+) gradient and hence contribute to the maintenance of the energy status and function of neurons. Mediates sodium-coupled electrogenic transport of pyroglutamate (5-oxo-L-proline). Can mediate the transport of chloride, bromide, iodide and nitrate ions when the external concentration of sodium ions is reduced. This Homo sapiens (Human) protein is Sodium-coupled monocarboxylate transporter 1.